A 117-amino-acid polypeptide reads, in one-letter code: Ribosome-binding factor A (117 aa).

The protein belongs to the RbfA family. In terms of assembly, monomer. Binds 30S ribosomal subunits, but not 50S ribosomal subunits or 70S ribosomes.

It is found in the cytoplasm. Functionally, one of several proteins that assist in the late maturation steps of the functional core of the 30S ribosomal subunit. Associates with free 30S ribosomal subunits (but not with 30S subunits that are part of 70S ribosomes or polysomes). Required for efficient processing of 16S rRNA. May interact with the 5'-terminal helix region of 16S rRNA. The polypeptide is Ribosome-binding factor A (Lactiplantibacillus plantarum (strain ATCC BAA-793 / NCIMB 8826 / WCFS1) (Lactobacillus plantarum)).